We begin with the raw amino-acid sequence, 428 residues long: D-alanine--D-alanine ligase (428 aa).

Residues Lys205–Glu424 enclose the ATP-grasp domain. Asp237–Glu299 is an ATP binding site. Asp378, Glu391, and Asn393 together coordinate Mg(2+).

The protein belongs to the D-alanine--D-alanine ligase family. Mg(2+) is required as a cofactor. The cofactor is Mn(2+).

The protein resides in the cytoplasm. The enzyme catalyses 2 D-alanine + ATP = D-alanyl-D-alanine + ADP + phosphate + H(+). It functions in the pathway cell wall biogenesis; peptidoglycan biosynthesis. Cell wall formation. The chain is D-alanine--D-alanine ligase from Bifidobacterium longum (strain NCC 2705).